The sequence spans 276 residues: Large ribosomal subunit protein uL2 (276 aa).

Disordered regions lie at residues 14–58 and 221–276; these read RNAS…GGGH and TRGE…KNRK. Positions 16 to 27 are enriched in polar residues; sequence ASVSDFSELTRS. Basic residues predominate over residues 255 to 276; the sequence is RRPKKASNKMIVRRRPSGKNRK.

It belongs to the universal ribosomal protein uL2 family. As to quaternary structure, part of the 50S ribosomal subunit. Forms a bridge to the 30S subunit in the 70S ribosome.

One of the primary rRNA binding proteins. Required for association of the 30S and 50S subunits to form the 70S ribosome, for tRNA binding and peptide bond formation. It has been suggested to have peptidyltransferase activity; this is somewhat controversial. Makes several contacts with the 16S rRNA in the 70S ribosome. In Bifidobacterium longum subsp. infantis (strain ATCC 15697 / DSM 20088 / JCM 1222 / NCTC 11817 / S12), this protein is Large ribosomal subunit protein uL2.